Consider the following 66-residue polypeptide: Protein translocase subunit SecE (66 aa).

Residues Leu29–Val49 traverse the membrane as a helical segment.

The protein belongs to the SecE/SEC61-gamma family. In terms of assembly, component of the Sec protein translocase complex. Heterotrimer consisting of SecY, SecE and SecG subunits. The heterotrimers can form oligomers, although 1 heterotrimer is thought to be able to translocate proteins. Interacts with the ribosome. Interacts with SecDF, and other proteins may be involved. Interacts with SecA.

The protein resides in the cell inner membrane. Its function is as follows. Essential subunit of the Sec protein translocation channel SecYEG. Clamps together the 2 halves of SecY. May contact the channel plug during translocation. This Rickettsia montanensis protein is Protein translocase subunit SecE.